We begin with the raw amino-acid sequence, 360 residues long: DNA replication and repair protein RecF (360 aa).

Glycine 30–threonine 37 contacts ATP.

Belongs to the RecF family.

The protein localises to the cytoplasm. Its function is as follows. The RecF protein is involved in DNA metabolism; it is required for DNA replication and normal SOS inducibility. RecF binds preferentially to single-stranded, linear DNA. It also seems to bind ATP. The protein is DNA replication and repair protein RecF of Acinetobacter baumannii (strain SDF).